Consider the following 393-residue polypeptide: Dual-specificity RNA methyltransferase RlmN (393 aa).

Glu-115 (proton acceptor) is an active-site residue. Positions 121–365 constitute a Radical SAM core domain; it reads EEDRGTLCIS…APIRKTRGDD (245 aa). Residues Cys-128 and Cys-370 are joined by a disulfide bond. Residues Cys-135, Cys-139, and Cys-142 each contribute to the [4Fe-4S] cluster site. Residues 194–195, Ser-226, 248–250, and Asn-327 contribute to the S-adenosyl-L-methionine site; these read GE and SFH. The active-site S-methylcysteine intermediate is Cys-370.

Belongs to the radical SAM superfamily. RlmN family. [4Fe-4S] cluster serves as cofactor.

The protein resides in the cytoplasm. The catalysed reaction is adenosine(2503) in 23S rRNA + 2 reduced [2Fe-2S]-[ferredoxin] + 2 S-adenosyl-L-methionine = 2-methyladenosine(2503) in 23S rRNA + 5'-deoxyadenosine + L-methionine + 2 oxidized [2Fe-2S]-[ferredoxin] + S-adenosyl-L-homocysteine. It catalyses the reaction adenosine(37) in tRNA + 2 reduced [2Fe-2S]-[ferredoxin] + 2 S-adenosyl-L-methionine = 2-methyladenosine(37) in tRNA + 5'-deoxyadenosine + L-methionine + 2 oxidized [2Fe-2S]-[ferredoxin] + S-adenosyl-L-homocysteine. In terms of biological role, specifically methylates position 2 of adenine 2503 in 23S rRNA and position 2 of adenine 37 in tRNAs. m2A2503 modification seems to play a crucial role in the proofreading step occurring at the peptidyl transferase center and thus would serve to optimize ribosomal fidelity. This Ruegeria pomeroyi (strain ATCC 700808 / DSM 15171 / DSS-3) (Silicibacter pomeroyi) protein is Dual-specificity RNA methyltransferase RlmN.